A 500-amino-acid chain; its full sequence is MSNKDDLETAVITEATPIREDENCEPVKNFESVDQSAKSESKSEPVASTRKRPESKPSSDLETEVLPVQASQAAGKETVSKDVPQSGWGYWGSWGKSLLSSASATVATVGQGISNVIEKAETSLGIPSPSEISTEVQYATGETSAKENGNSSPMSGPFGVFSTISTAVQSTGKSVISGGLDALEFIGKKTMDVIAEGDPGFKRTKGLMNRTSTLSQVLREAKEKEELWTSNEVTMETDKKTHYGLLFDEFQGLSHLEALEMLSRESEIKVKSILNSLSGEELETLKLELEQLKEAFSLAELCEEEEEEKKGGEDFTKEITELFSQLHVSSKPEKLARARNTAYEWIRTSLAKPLKEKEEGEKQLEAENTEQINNKSIEDIHAFAIRSLAELTACSIELFHKTAALVLHGRKQEVTTIERSRALCQMTVLLCKELSCLSKEFTTCLTTAGVKEKADVLNPLITAVFLEASNSASYIQDAFQLLLPVLEISFIENKTELPEA.

Positions 1 to 82 are disordered; that stretch reads MSNKDDLETA…AAGKETVSKD (82 aa). A phosphoserine mark is found at Ser93, Ser152, and Ser215.

Belongs to the FAM114 family.

In Bos taurus (Bovine), this protein is Protein FAM114A2 (FAM114A1).